A 304-amino-acid polypeptide reads, in one-letter code: Bacteriochlorophyll synthase 33 kDa chain (304 aa).

The next 9 helical transmembrane spans lie at 26 to 46 (VTWF…NVPI), 51 to 71 (GVVV…SQAA), 94 to 114 (IPGL…LVVG), 117 to 137 (LGSW…AYSV), 151 to 171 (GLVG…VLLA), 178 to 198 (GFPI…IMTI), 227 to 247 (IACT…YLFS), 250 to 270 (YHAT…SVWM), and 279 to 299 (WYNG…AFAI).

It is found in the cell membrane. Its pathway is porphyrin-containing compound metabolism; bacteriochlorophyll biosynthesis (light-independent). Its function is as follows. Catalyzes the esterification of bacteriochlorophyllide a by geranylgeraniol-PPi. The polypeptide is Bacteriochlorophyll synthase 33 kDa chain (bchG) (Rhodobacter capsulatus (strain ATCC BAA-309 / NBRC 16581 / SB1003)).